The primary structure comprises 80 residues: UPF0154 protein SH1564 (80 aa).

The helical transmembrane segment at 4-24 threads the bilayer; it reads WLAILLIIVALIGGLVGGFFL.

This sequence belongs to the UPF0154 family.

It is found in the membrane. The sequence is that of UPF0154 protein SH1564 from Staphylococcus haemolyticus (strain JCSC1435).